The following is a 65-amino-acid chain: MNMKILVLVAVLCLVVSTHAERHSKTDMEDSPMIQERKCLPPGKPCYGATQKIPCCGVCSHNNCT.

The signal sequence occupies residues 1 to 20 (MNMKILVLVAVLCLVVSTHA). Positions 21–37 (ERHSKTDMEDSPMIQER) are excised as a propeptide. 3 disulfide bridges follow: cysteine 39-cysteine 56, cysteine 46-cysteine 59, and cysteine 55-cysteine 64.

It belongs to the neurotoxin 36 family. 02 subfamily. As to expression, expressed by the venom gland.

Its subcellular location is the secreted. Reversibly blocks N-type calcium channels (Cav2.2/CACNA1B) in rat dorsal root ganglion cells. Elicits no toxic symptoms in either vertebrates or invertebrates during a period of 48 hours post-injection, when it was assayed in vivo by direct injection into mice and cockroaches. This is Hainantoxin-X from Cyriopagopus hainanus (Chinese bird spider).